Consider the following 88-residue polypeptide: Synaptonemal complex central element protein 3 (88 aa).

Positions 8–75 (ERSYDNMLKM…FLNCKEEMEK (68 aa)) form a coiled coil.

In terms of assembly, homodimer. Can form higher-order homooligomers. Interacts with SYCP1 (via tetrameric core); the interaction remodels SYCP1 homotetramers to 2:1 heterotrimers with SYCE3. SYCP1/SYCE3 heterotrimers form lattice assemblies as part of the mature synaptonemal complex via both lateral and head-to-head interactions. Interacts with the SYCE1-SIX6OS1 complex; the interaction recruits the SYCE1-SIX6OS1 complex to the central element of the synaptonemal complex. Interacts with the SYCE2-TEX12 complex; the interaction promotes fibrous assembly of SYCE2-TEX12 as part of the synaptonemal complex central element. Interacts with SYCE1. Interacts with SYCE2. Interacts with proteasome subunit PSMA8; to participate in meiosis progression during spermatogenesis. Interacts with SPO16. As to expression, expression is restricted to spermatocytes and is absent in spermatogonia, spermatids and spermatogonia (at protein level). Expressed in adult testis and embryonic ovary. Expressed in the convoluted seminiferous tubules in spermatogonia and spermatocytes.

It localises to the nucleus. It is found in the chromosome. Major component of the transverse central element of synaptonemal complexes (SCS), formed between homologous chromosomes during meiotic prophase. Required for the assembly of the central element of the synaptonemal complex during meiosis, via remodeling of SYCP1 lattice structures and promoting recruitment of SYCE2-TEX12 and SYCE1-SIX60S1 complexes. Required for chromosome loading of the central element-specific SCS proteins, and for initiating synapsis between homologous chromosomes. Chromosome loading appears to require SYCP1. Required for fertility and normal testis development. May play a role in apoptosis of spermatogenic cells and pathogenesis of cryptorchidism. In Mus musculus (Mouse), this protein is Synaptonemal complex central element protein 3.